We begin with the raw amino-acid sequence, 282 residues long: Elongation factor Ts (282 aa).

The tract at residues 80 to 83 (TDFV) is involved in Mg(2+) ion dislocation from EF-Tu.

This sequence belongs to the EF-Ts family.

It localises to the cytoplasm. In terms of biological role, associates with the EF-Tu.GDP complex and induces the exchange of GDP to GTP. It remains bound to the aminoacyl-tRNA.EF-Tu.GTP complex up to the GTP hydrolysis stage on the ribosome. This is Elongation factor Ts from Aliivibrio salmonicida (strain LFI1238) (Vibrio salmonicida (strain LFI1238)).